Here is a 218-residue protein sequence, read N- to C-terminus: Large ribosomal subunit protein uL3 (218 aa).

Disordered regions lie at residues 128–167 (FSRG…RMGG) and 199–218 (SLLN…QGGK).

Belongs to the universal ribosomal protein uL3 family. Part of the 50S ribosomal subunit. Forms a cluster with proteins L14 and L19.

One of the primary rRNA binding proteins, it binds directly near the 3'-end of the 23S rRNA, where it nucleates assembly of the 50S subunit. The protein is Large ribosomal subunit protein uL3 of Prochlorococcus marinus (strain NATL2A).